The following is a 132-amino-acid chain: Small ribosomal subunit protein uS13 (132 aa).

Residues 101–125 (RGLPVRGQRTKTNARTRKGPRKTVA) show a composition bias toward basic residues. A disordered region spans residues 101 to 132 (RGLPVRGQRTKTNARTRKGPRKTVANKKIETR).

Belongs to the universal ribosomal protein uS13 family. As to quaternary structure, part of the 30S ribosomal subunit. Forms a loose heterodimer with protein S19. Forms two bridges to the 50S subunit in the 70S ribosome.

Located at the top of the head of the 30S subunit, it contacts several helices of the 16S rRNA. In the 70S ribosome it contacts the 23S rRNA (bridge B1a) and protein L5 of the 50S subunit (bridge B1b), connecting the 2 subunits; these bridges are implicated in subunit movement. Contacts the tRNAs in the A and P-sites. The chain is Small ribosomal subunit protein uS13 from Ureaplasma parvum serovar 3 (strain ATCC 27815 / 27 / NCTC 11736).